Reading from the N-terminus, the 404-residue chain is Tryptophan synthase beta chain (404 aa).

At K98 the chain carries N6-(pyridoxal phosphate)lysine.

It belongs to the TrpB family. In terms of assembly, tetramer of two alpha and two beta chains. Pyridoxal 5'-phosphate serves as cofactor.

It carries out the reaction (1S,2R)-1-C-(indol-3-yl)glycerol 3-phosphate + L-serine = D-glyceraldehyde 3-phosphate + L-tryptophan + H2O. It functions in the pathway amino-acid biosynthesis; L-tryptophan biosynthesis; L-tryptophan from chorismate: step 5/5. In terms of biological role, the beta subunit is responsible for the synthesis of L-tryptophan from indole and L-serine. This is Tryptophan synthase beta chain from Rhodopseudomonas palustris (strain HaA2).